Here is a 624-residue protein sequence, read N- to C-terminus: Glutaminase 2 (624 aa).

Positions 1 to 20 (MDTQPIRLPSVAGATRSAGY) are disordered. Positions 43 to 325 (GELADYIPEL…LSARFDLHML (283 aa)) are glutaminase. Residues Ser-85, Asn-134, Glu-178, Asn-185, Tyr-209, Tyr-261, and Val-279 each coordinate substrate. Positions 355–466 (QQILDERHSD…ALLDDAIEWA (112 aa)) constitute an STAS domain. 491-608 (LLAELDTDEI…IMRNLAAILA (118 aa)) contacts a nucleoside 3',5'-cyclic phosphate.

It belongs to the glutaminase family. Homotetramer.

The catalysed reaction is L-glutamine + H2O = L-glutamate + NH4(+). The chain is Glutaminase 2 (glsA2) from Bradyrhizobium diazoefficiens (strain JCM 10833 / BCRC 13528 / IAM 13628 / NBRC 14792 / USDA 110).